Reading from the N-terminus, the 606-residue chain is Anthranilate synthase alpha subunit 2, chloroplastic (606 aa).

Residues 1-49 constitute a chloroplast transit peptide; the sequence is MESIAAATFTPSRLAARPATPAAAAAPVRARAAVAAGGRRRTSRRGGVR.

Belongs to the anthranilate synthase component I family. In terms of assembly, heterotetramer consisting of two non-identical subunits: a beta subunit and a large alpha subunit.

The protein resides in the plastid. It is found in the chloroplast. The catalysed reaction is chorismate + L-glutamine = anthranilate + pyruvate + L-glutamate + H(+). It functions in the pathway amino-acid biosynthesis; L-tryptophan biosynthesis; L-tryptophan from chorismate: step 1/5. With respect to regulation, feedback inhibition by tryptophan. Its function is as follows. Part of a heterotetrameric complex that catalyzes the two-step biosynthesis of anthranilate, an intermediate in the biosynthesis of L-tryptophan. In the first step, the glutamine-binding beta subunit of anthranilate synthase (AS) provides the glutamine amidotransferase activity which generates ammonia as a substrate that, along with chorismate, is used in the second step, catalyzed by the large alpha subunit of AS to produce anthranilate. The protein is Anthranilate synthase alpha subunit 2, chloroplastic of Oryza sativa subsp. japonica (Rice).